The sequence spans 319 residues: L-lactate dehydrogenase (319 aa).

Residues valine 17, aspartate 38, lysine 43, tyrosine 69, and 83–84 (GA) contribute to the NAD(+) site. Residues glutamine 86, arginine 92, and 124 to 127 (NPVD) contribute to the substrate site. NAD(+) is bound by residues 122 to 124 (ATN) and serine 147. 152–155 (DTAR) provides a ligand contact to substrate. Arginine 157 and histidine 172 together coordinate beta-D-fructose 1,6-bisphosphate. Histidine 179 serves as the catalytic Proton acceptor. Position 224 is a phosphotyrosine (tyrosine 224). Threonine 233 provides a ligand contact to substrate.

It belongs to the LDH/MDH superfamily. LDH family. As to quaternary structure, homotetramer.

Its subcellular location is the cytoplasm. It carries out the reaction (S)-lactate + NAD(+) = pyruvate + NADH + H(+). It participates in fermentation; pyruvate fermentation to lactate; (S)-lactate from pyruvate: step 1/1. Its activity is regulated as follows. Allosterically activated by fructose 1,6-bisphosphate (FBP). Functionally, catalyzes the conversion of lactate to pyruvate. The sequence is that of L-lactate dehydrogenase from Bacillus licheniformis (strain ATCC 14580 / DSM 13 / JCM 2505 / CCUG 7422 / NBRC 12200 / NCIMB 9375 / NCTC 10341 / NRRL NRS-1264 / Gibson 46).